Here is a 292-residue protein sequence, read N- to C-terminus: UPF0282 protein MJ1629 (292 aa).

Belongs to the UPF0282 family.

The polypeptide is UPF0282 protein MJ1629 (Methanocaldococcus jannaschii (strain ATCC 43067 / DSM 2661 / JAL-1 / JCM 10045 / NBRC 100440) (Methanococcus jannaschii)).